The following is a 232-amino-acid chain: Leucyl/phenylalanyl-tRNA--protein transferase (232 aa).

The protein belongs to the L/F-transferase family.

The protein resides in the cytoplasm. It catalyses the reaction N-terminal L-lysyl-[protein] + L-leucyl-tRNA(Leu) = N-terminal L-leucyl-L-lysyl-[protein] + tRNA(Leu) + H(+). It carries out the reaction N-terminal L-arginyl-[protein] + L-leucyl-tRNA(Leu) = N-terminal L-leucyl-L-arginyl-[protein] + tRNA(Leu) + H(+). The catalysed reaction is L-phenylalanyl-tRNA(Phe) + an N-terminal L-alpha-aminoacyl-[protein] = an N-terminal L-phenylalanyl-L-alpha-aminoacyl-[protein] + tRNA(Phe). Functions in the N-end rule pathway of protein degradation where it conjugates Leu, Phe and, less efficiently, Met from aminoacyl-tRNAs to the N-termini of proteins containing an N-terminal arginine or lysine. The polypeptide is Leucyl/phenylalanyl-tRNA--protein transferase (Nitrosospira multiformis (strain ATCC 25196 / NCIMB 11849 / C 71)).